Reading from the N-terminus, the 1256-residue chain is Receptor tyrosine-protein kinase erbB-2 (1256 aa).

The signal sequence occupies residues 1 to 22 (MELAAWCRWGFLLALLSPGAAG). Residues 23-653 (TQVCTGTDMK…PAEQRASPVT (631 aa)) lie on the Extracellular side of the membrane. Cys26 and Cys53 form a disulfide bridge. N-linked (GlcNAc...) asparagine glycans are attached at residues Asn68, Asn125, and Asn188. 16 disulfides stabilise this stretch: Cys163–Cys193, Cys196–Cys205, Cys200–Cys213, Cys221–Cys228, Cys225–Cys236, Cys237–Cys245, Cys241–Cys253, Cys256–Cys265, Cys269–Cys296, Cys300–Cys312, Cys316–Cys332, Cys335–Cys339, Cys343–Cys368, Cys476–Cys505, Cys512–Cys521, and Cys516–Cys529. Asn260 carries an N-linked (GlcNAc...) asparagine glycan. Asn531 carries an N-linked (GlcNAc...) asparagine glycan. Cystine bridges form between Cys532/Cys541, Cys545/Cys561, Cys564/Cys577, Cys568/Cys585, Cys588/Cys597, Cys601/Cys624, Cys627/Cys635, and Cys631/Cys643. N-linked (GlcNAc...) asparagine glycosylation is present at Asn572. N-linked (GlcNAc...) asparagine glycosylation is present at Asn630. The chain crosses the membrane as a helical span at residues 654–674 (FIIATVVGVLLFLIIVVVIGI). The Cytoplasmic portion of the chain corresponds to 675–1256 (LIKRRRQKIR…PEYLGLDVPV (582 aa)). A required for interaction with KPNB1 and EEA1 region spans residues 677-690 (KRRRQKIRKYTMRR). The Nuclear localization signal signature appears at 677-690 (KRRRQKIRKYTMRR). One can recognise a Protein kinase domain in the interval 721–988 (LRKLKVLGSG…RMARDPQRFV (268 aa)). ATP is bound by residues 727-735 (LGSGAFGTV) and Lys754. Asp846 acts as the Proton acceptor in catalysis. Tyr878 carries the phosphotyrosine modification. Positions 1030-1180 (GFFSPDPALG…PKTLSPGKNG (151 aa)) are disordered. 4 positions are modified to phosphoserine: Ser1055, Ser1079, Ser1084, and Ser1108. A Phosphotyrosine modification is found at Tyr1113. Position 1140 is a phosphotyrosine; by autocatalysis (Tyr1140). The residue at position 1167 (Thr1167) is a Phosphothreonine. An interaction with PIK3C2B region spans residues 1196–1198 (EYL). Tyr1197 is subject to Phosphotyrosine. Disordered regions lie at residues 1200–1219 (PRAGTASQPHPSPAFSPAFD) and 1224–1256 (WDQNSSEQGPPPSTFEGTPTAENPEYLGLDVPV). The residue at position 1249 (Tyr1249) is a Phosphotyrosine; by autocatalysis.

It belongs to the protein kinase superfamily. Tyr protein kinase family. EGF receptor subfamily. As to quaternary structure, homodimer. Heterodimer with EGFR, ERBB3 and ERBB4. Part of a complex with EGFR and either PIK3C2A or PIK3C2B. May interact with PIK3C2B when phosphorylated on Tyr-1197. Interacts with PLXNB1. Interacts (when phosphorylated on Tyr-1249) with MEMO1. Interacts with MUC1. Interacts (when phosphorylated on Tyr-1140) with GRB7 (via SH2 domain). Interacts (when phosphorylated on Tyr-1249) with ERBIN. Interacts with KPNB1, RANBP2, EEA1, CRM1, CLTC, PTK6, RPA194 and ACTB. Interacts (preferentially with the tyrosine phosphorylated form) with CPNE3; this interaction occurs at the cell membrane and is increased in a growth factor heregulin-dependent manner. Interacts with HSP90AA1 and HSP90AB1 in an ATP-dependent manner; the interaction suppresses ERBB2 kinase activity. Interacts with SRC. Interacts with MYOC. Interacts with PRKCABP. Interacts with SORL1; this interaction regulates ERBB2 subcellular distribution by promoting its recycling after internalization from endosomes back to the plasma membrane, hence stimulates ERBB2-mediated signaling. Interacts with SH3BGRL. Interacts with ROR1. Autophosphorylated. Autophosphorylation occurs in trans, i.e. one subunit of the dimeric receptor phosphorylates tyrosine residues on the other subunit. Ligand-binding increases phosphorylation on tyrosine residues. Signaling via SEMA4C promotes phosphorylation at Tyr-1249. Dephosphorylated by PTPN12. Expressed predominantly in uterine epithelial cells. In the muscle, expression localizes to the synaptic sites of muscle fibers.

The protein resides in the cell membrane. The protein localises to the cell projection. It localises to the ruffle membrane. Its subcellular location is the early endosome. It is found in the cytoplasm. The protein resides in the perinuclear region. The protein localises to the nucleus. The catalysed reaction is L-tyrosyl-[protein] + ATP = O-phospho-L-tyrosyl-[protein] + ADP + H(+). Functionally, protein tyrosine kinase that is part of several cell surface receptor complexes, but that apparently needs a coreceptor for ligand binding. Essential component of a neuregulin-receptor complex, although neuregulins do not interact with it alone. GP30 is a potential ligand for this receptor. Regulates outgrowth and stabilization of peripheral microtubules (MTs). Upon ERBB2 activation, the MEMO1-RHOA-DIAPH1 signaling pathway elicits the phosphorylation and thus the inhibition of GSK3B at cell membrane. This prevents the phosphorylation of APC and CLASP2, allowing its association with the cell membrane. In turn, membrane-bound APC allows the localization of MACF1 to the cell membrane, which is required for microtubule capture and stabilization. In terms of biological role, in the nucleus is involved in transcriptional regulation. Associates with the 5'-TCAAATTC-3' sequence in the PTGS2/COX-2 promoter and activates its transcription. Implicated in transcriptional activation of CDKN1A; the function involves STAT3 and SRC. Involved in the transcription of rRNA genes by RNA Pol I and enhances protein synthesis and cell growth. This is Receptor tyrosine-protein kinase erbB-2 (Erbb2) from Mus musculus (Mouse).